Reading from the N-terminus, the 682-residue chain is Potassium-transporting ATPase ATP-binding subunit (682 aa).

The next 4 membrane-spanning stretches (helical) occupy residues 34–54 (PVMFVVWAGSVLTTLLTLAMV), 58–78 (IAGSALFTGIISLWLWFTVLF), 219–239 (IALTILLIALTIVFLLATATL), and 254–274 (VLVALLVCLIPTTIGGLLSAI). Asp307 acts as the 4-aspartylphosphate intermediate in catalysis. Residues Asp344, Glu348, 377 to 384 (FTAQSRMS), and Lys395 each bind ATP. Residues Asp518 and Asp522 each coordinate Mg(2+). Transmembrane regions (helical) follow at residues 588-608 (FAIIPAAFAATYPQLNALNVM), 616-636 (AILSAVIFNALIIIFLIPLAL), and 662-682 (LVVPFIGIKVIDVLLTLLGLA).

Belongs to the cation transport ATPase (P-type) (TC 3.A.3) family. Type IA subfamily. As to quaternary structure, the system is composed of three essential subunits: KdpA, KdpB and KdpC.

It localises to the cell inner membrane. It carries out the reaction K(+)(out) + ATP + H2O = K(+)(in) + ADP + phosphate + H(+). Part of the high-affinity ATP-driven potassium transport (or Kdp) system, which catalyzes the hydrolysis of ATP coupled with the electrogenic transport of potassium into the cytoplasm. This subunit is responsible for energy coupling to the transport system and for the release of the potassium ions to the cytoplasm. In Salmonella agona (strain SL483), this protein is Potassium-transporting ATPase ATP-binding subunit.